The sequence spans 124 residues: Small ribosomal subunit protein uS12 (124 aa).

A disordered region spans residues 1 to 23; that stretch reads MATINQLVRKPRRSKVTKSNSAA. Aspartate 89 is modified (3-methylthioaspartic acid).

This sequence belongs to the universal ribosomal protein uS12 family. Part of the 30S ribosomal subunit. Contacts proteins S8 and S17. May interact with IF1 in the 30S initiation complex.

In terms of biological role, with S4 and S5 plays an important role in translational accuracy. Functionally, interacts with and stabilizes bases of the 16S rRNA that are involved in tRNA selection in the A site and with the mRNA backbone. Located at the interface of the 30S and 50S subunits, it traverses the body of the 30S subunit contacting proteins on the other side and probably holding the rRNA structure together. The combined cluster of proteins S8, S12 and S17 appears to hold together the shoulder and platform of the 30S subunit. The polypeptide is Small ribosomal subunit protein uS12 (Pseudoalteromonas translucida (strain TAC 125)).